The sequence spans 295 residues: Histamine N-methyltransferase (295 aa).

Glu-28 is a substrate binding site. S-adenosyl-L-methionine contacts are provided by Gly-60, Glu-89, Gln-94, Ser-120, and Ile-143. Asn-284 contacts substrate.

It belongs to the class I-like SAM-binding methyltransferase superfamily. HNMT family. Monomer.

It localises to the cytoplasm. The catalysed reaction is histamine + S-adenosyl-L-methionine = N(tau)-methylhistamine + S-adenosyl-L-homocysteine + H(+). Functionally, inactivates histamine by N-methylation. Plays an important role in degrading histamine and in regulating the airway response to histamine. The protein is Histamine N-methyltransferase (Hnmt) of Mus musculus (Mouse).